Reading from the N-terminus, the 118-residue chain is UPF0102 protein Nwi_0116 (118 aa).

The protein belongs to the UPF0102 family.

The protein is UPF0102 protein Nwi_0116 of Nitrobacter winogradskyi (strain ATCC 25391 / DSM 10237 / CIP 104748 / NCIMB 11846 / Nb-255).